We begin with the raw amino-acid sequence, 618 residues long: Neurosecretory protein VGF (618 aa).

The N-terminal stretch at 1–23 (MKSLRLPATVLFCLLLLIKGLGA) is a signal peptide. Disordered regions lie at residues 23-46 (AAPP…PVAG), 86-201 (VLLQ…LESP), and 219-262 (PERA…GEAL). Residues 26–37 (PGHPEAQPPPPS) are compositionally biased toward pro residues. A compositionally biased stretch (low complexity) spans 180 to 195 (ETAAAETETRTHTLTR). A coiled-coil region spans residues 301–332 (LAQVEAGRRQAEATRQAAAQEERLADLASDLL). Gln-310 bears the Pyrrolidone carboxylic acid mark. Residues 342 to 603 (RQRGLGGRGL…EAEERRLQEQ (262 aa)) form a disordered region. The span at 356-378 (GGGRETARQQEEAEQERRGGEER) shows a compositional bias: basic and acidic residues. Acidic residues predominate over residues 379 to 395 (VGEEDEEAAEAEAEAEE). Basic and acidic residues predominate over residues 416-434 (AEDKRSREETPGHRRKEAE). Position 421 is a phosphoserine (Ser-421). Phosphothreonine is present on Thr-425. The segment covering 435-451 (GAEEGGAEDEDDDEEMD) has biased composition (acidic residues). Residues 490-500 (PPEPVPPPRAA) are compositionally biased toward pro residues. Over residues 578–602 (HYPDREAQARRAQEEAEAEERRLQE) the composition is skewed to basic and acidic residues.

In terms of processing, multiple peptides are derived from VGF, with activities in synaptic plasticity, antidepression, penile erection, autonomic activation, and increases in energy expenditure.

It is found in the secreted. It localises to the cytoplasmic vesicle. The protein localises to the secretory vesicle. Secreted polyprotein that is packaged and proteolytically processed by prohormone convertases PCSK1 and PCSK2 in a cell-type-specific manner. VGF and peptides derived from its processing play many roles in neurogenesis and neuroplasticity associated with learning, memory, depression and chronic pain. Functionally, plays a role in the control of body fluid homeostasis by regulating vasopressin release. Suppresses presynaptic glutamatergic neurons connected to vasopressin neurons. Its function is as follows. Plays a role in the control of body fluid homeostasis by regulating vasopressin release. Activates GABAergic interneurons which are inhibitory neurons of the nervous system and thereby suppresses presynaptic glutamatergic neurons. Also stimulates feeding behavior in an orexin-dependent manner in the hypothalamus. Functions as a positive regulator for the activation of orexin neurons resulting in elevated gastric acid secretion and gastric emptying. This is Neurosecretory protein VGF from Bos taurus (Bovine).